Consider the following 796-residue polypeptide: Cation/H(+) antiporter 6B (796 aa).

13 consecutive transmembrane segments (helical) span residues 54–74 (DFWEYPLPQLEIIILSIFLLW), 93–113 (SMMLVGAVLSEMFGSMQIPCL), 131–151 (IGAFAFVLDWFLRGVTTDVGI), 159–179 (SVVIGITSMIIPWQIGKLLYS), 194–213 (YTVMTFTMSMTPFTCVNMLL), 223–243 (FGQIAQSAGMVTDLLAFFLTV), 259–279 (LAFMAFFIFVYLVRQFMLWVI), 285–305 (GAPVKNVYLYIGLLLAYLSYL), 310–330 (FLFFGPLGAFALGLAVPNGPP), 344–364 (EGIFLPLFGSLSMIKLDWSFL), 382–402 (FSFLPIVYIAKFATSFLAALA), 411–431 (IILGVIMGTKSSFELGYVLTA), and 444–464 (LLGVYILVNSLLTPMAIHFLY).

It belongs to the monovalent cation:proton antiporter 2 (CPA2) transporter (TC 2.A.37) family. CHX (TC 2.A.37.4) subfamily. As to expression, preferentially expressed in pollen.

It localises to the membrane. Functionally, may operate as a cation/H(+) antiporter. The sequence is that of Cation/H(+) antiporter 6B (CHX6b) from Arabidopsis thaliana (Mouse-ear cress).